The primary structure comprises 307 residues: Homoserine O-acetyltransferase (307 aa).

The Acyl-thioester intermediate role is filled by cysteine 142. Lysine 163 and serine 192 together coordinate substrate. Histidine 235 (proton acceptor) is an active-site residue. The active site involves glutamate 237. Residue arginine 249 coordinates substrate.

It belongs to the MetA family.

Its subcellular location is the cytoplasm. It carries out the reaction L-homoserine + acetyl-CoA = O-acetyl-L-homoserine + CoA. It participates in amino-acid biosynthesis; L-methionine biosynthesis via de novo pathway; O-acetyl-L-homoserine from L-homoserine: step 1/1. In terms of biological role, transfers an acetyl group from acetyl-CoA to L-homoserine, forming acetyl-L-homoserine. This is Homoserine O-acetyltransferase from Rhizobium leguminosarum bv. trifolii (strain WSM2304).